Reading from the N-terminus, the 478-residue chain is Proline--tRNA ligase (478 aa).

The protein belongs to the class-II aminoacyl-tRNA synthetase family. ProS type 3 subfamily. As to quaternary structure, homodimer.

The protein localises to the cytoplasm. It carries out the reaction tRNA(Pro) + L-proline + ATP = L-prolyl-tRNA(Pro) + AMP + diphosphate. In terms of biological role, catalyzes the attachment of proline to tRNA(Pro) in a two-step reaction: proline is first activated by ATP to form Pro-AMP and then transferred to the acceptor end of tRNA(Pro). The protein is Proline--tRNA ligase of Clostridium botulinum (strain Kyoto / Type A2).